The following is a 194-amino-acid chain: MTENSTSAPAAKPKRAKASKKSTDHPKYSDMVVAAIQAEKNRAGSSRQSIQKYIKSHYKVGENADSQIKLSIKRLVTTGVLKQTKGVGASGSFRLAKSDEPKKSVAFKKTKKEIKKVATPKKASKPKKAASKAPTKKPKATPVKKAKKKLAATPKKAKKPKTVKAKPVKASKPKKAKPVKPKAKSSAKRAGKKK.

Residue methionine 1 is modified to N-acetylmethionine. The span at 1 to 11 (MTENSTSAPAA) shows a compositional bias: low complexity. The segment at 1–29 (MTENSTSAPAAKPKRAKASKKSTDHPKYS) is disordered. Threonine 2 carries the N-acetylthreonine; in Histone H1.0, N-terminally processed modification. The H15 domain occupies 24 to 97 (DHPKYSDMVV…GASGSFRLAK (74 aa)). Citrulline is present on arginine 42. The tract at residues 84 to 194 (TKGVGASGSF…SSAKRAGKKK (111 aa)) is disordered. Serine 104 carries the post-translational modification ADP-ribosylserine. The span at 105–194 (VAFKKTKKEI…SSAKRAGKKK (90 aa)) shows a compositional bias: basic residues.

Belongs to the histone H1/H5 family. ADP-ribosylated on Ser-104 in response to DNA damage.

It localises to the nucleus. It is found in the chromosome. Its function is as follows. Histones H1 are necessary for the condensation of nucleosome chains into higher-order structures. The histones H1.0 are found in cells that are in terminal stages of differentiation or that have low rates of cell division. The sequence is that of Histone H1.0 (H1-0) from Pongo abelii (Sumatran orangutan).